The primary structure comprises 528 residues: Probable rhamnogalacturonate lyase A (528 aa).

A signal peptide spans 1–20 (MLSKATLLLSLPFWARVANA). Residue asparagine 46 is glycosylated (N-linked (GlcNAc...) asparagine). 2 disulfides stabilise this stretch: cysteine 50-cysteine 93 and cysteine 184-cysteine 193. Asparagine 351 carries an N-linked (GlcNAc...) asparagine glycan.

It belongs to the polysaccharide lyase 4 family.

Its subcellular location is the secreted. It carries out the reaction Endotype eliminative cleavage of L-alpha-rhamnopyranosyl-(1-&gt;4)-alpha-D-galactopyranosyluronic acid bonds of rhamnogalacturonan I domains in ramified hairy regions of pectin leaving L-rhamnopyranose at the reducing end and 4-deoxy-4,5-unsaturated D-galactopyranosyluronic acid at the non-reducing end.. Pectinolytic enzymes consist of four classes of enzymes: pectin lyase, polygalacturonase, pectin methylesterase and rhamnogalacturonase. Degrades the rhamnogalacturonan I (RG-I) backbone of pectin. The sequence is that of Probable rhamnogalacturonate lyase A (rglA) from Neosartorya fischeri (strain ATCC 1020 / DSM 3700 / CBS 544.65 / FGSC A1164 / JCM 1740 / NRRL 181 / WB 181) (Aspergillus fischerianus).